The following is a 383-amino-acid chain: Acetylornithine deacetylase (383 aa).

Histidine 80 contributes to the Zn(2+) binding site. The active site involves aspartate 82. Position 112 (aspartate 112) interacts with Zn(2+). Residue glutamate 144 is part of the active site. Zn(2+) contacts are provided by glutamate 145, glutamate 169, and histidine 355.

Belongs to the peptidase M20A family. ArgE subfamily. As to quaternary structure, homodimer. It depends on Zn(2+) as a cofactor. Co(2+) is required as a cofactor. Requires glutathione as cofactor.

Its subcellular location is the cytoplasm. The catalysed reaction is N(2)-acetyl-L-ornithine + H2O = L-ornithine + acetate. It participates in amino-acid biosynthesis; L-arginine biosynthesis; L-ornithine from N(2)-acetyl-L-ornithine (linear): step 1/1. Catalyzes the hydrolysis of the amide bond of N(2)-acetylated L-amino acids. Cleaves the acetyl group from N-acetyl-L-ornithine to form L-ornithine, an intermediate in L-arginine biosynthesis pathway, and a branchpoint in the synthesis of polyamines. The sequence is that of Acetylornithine deacetylase from Escherichia coli O9:H4 (strain HS).